The primary structure comprises 2009 residues: Protein Daple (2009 aa).

The Calponin-homology (CH) domain maps to 11-131; it reads LFLQSPLVTW…KVLLLVLGCA (121 aa). A disordered region spans residues 221 to 251; the sequence is QTQQPPSPGKFSSPDSTPSPTSSLSSEDKQH. Phosphoserine is present on residues Ser-227 and Ser-239. A compositionally biased stretch (low complexity) spans 232-245; sequence SSPDSTPSPTSSLS. 2 coiled-coil regions span residues 247-425 and 456-1008; these read EDKQ…QKQS and ELNE…TQEG. A Phosphoserine modification is found at Ser-486. The disordered stretch occupies residues 1002-1036; that stretch reads LRQTQEGGDKAQNALKRPPGKVTSHQEKEAWEPSH. The span at 1025–1036 shows a compositional bias: basic and acidic residues; the sequence is SHQEKEAWEPSH. Residues 1190-1384 are a coiled coil; it reads HRNLELEHKE…LEEKIMDQYK (195 aa). The span at 1410-1419 shows a compositional bias: basic and acidic residues; the sequence is KEGSRERLKS. Disordered stretches follow at residues 1410–1716 and 1757–1787; these read KEGS…GAKM and GMPSRQVQPPQSLSLGRPRQTTMTQNCHMPV. The span at 1430-1439 shows a compositional bias: low complexity; it reads PSDPASPSPS. Residue Ser-1435 is modified to Phosphoserine. Residues 1440-1449 show a composition bias toward polar residues; the sequence is QALRSQTENP. Composition is skewed to low complexity over residues 1510–1524 and 1562–1581; these read TFSTSATTAALSSST and NSLESSRNASSNSSPLSLKG. Ser-1592 bears the Phosphoserine mark. The GBA signature appears at 1652–1683; it reads HSASPSSEMVTLEEFLEESNRGGSPTHDTPSC. Residues 1681–1697 are compositionally biased toward basic and acidic residues; the sequence is PSCRDDLLSDYFRKAHD. A compositionally biased stretch (polar residues) spans 1761-1783; sequence RQVQPPQSLSLGRPRQTTMTQNC. The residue at position 1798 (Ser-1798) is a Phosphoserine. The segment at 1808-2009 is disordered; that stretch reads SGPEACRPES…QTVWYEYGCV (202 aa). The span at 1866–1883 shows a compositional bias: basic and acidic residues; that stretch reads RPLDTRRFSLAPPKEERL. Positions 1898–1911 are enriched in polar residues; that stretch reads GCSSGSNPQIQHFS. A compositionally biased stretch (gly residues) spans 1943-1954; sequence TSEGDGGPGHGY. Over residues 1981–1991 the composition is skewed to polar residues; the sequence is SQGSSSKSTPA. Residues 2006-2009 carry the PDZ-binding motif; the sequence is YGCV. Residues 2007–2009 are DVL1-binding; sequence GCV.

It belongs to the CCDC88 family. In terms of assembly, homooligomer. Interacts with DVL1 (via PDZ domain); dissociates following initiation of non-canonical Wnt signaling. Interacts (via C-terminus) with ligand-activated Wnt receptor FZD7; competes with DVL1 for binding to FZD7 and displaces DVL1 from ligand-activated FZD7. Interacts (via GBA motif) with guanine nucleotide-binding protein G(i) alpha subunits GNAI1, GNAI2 and GNAI3 (inactive GDP-bound form); interacts with higher affinity with GNAI1 and GNAI3 than with GNAI2 and interaction leads to G(i) alpha subunit activation. Does not interact with GNAO1.

It localises to the cytoplasm. The protein resides in the cell junction. Required for activation of guanine nucleotide-binding proteins (G-proteins) during non-canonical Wnt signaling. Binds to ligand-activated Wnt receptor FZD7, displacing DVL1 from the FZD7 receptor and leading to inhibition of canonical Wnt signaling. Acts as a non-receptor guanine nucleotide exchange factor by also binding to guanine nucleotide-binding protein G(i) alpha (Gi-alpha) subunits, leading to their activation. Binding to Gi-alpha subunits displaces the beta and gamma subunits from the heterotrimeric G-protein complex, triggering non-canonical Wnt responses such as activation of RAC1 and PI3K-AKT signaling. Promotes apical constriction of cells via ARHGEF18. This is Protein Daple (Ccdc88c) from Mus musculus (Mouse).